Here is a 443-residue protein sequence, read N- to C-terminus: Thymidine phosphorylase (443 aa).

It belongs to the thymidine/pyrimidine-nucleoside phosphorylase family. Homodimer.

The enzyme catalyses thymidine + phosphate = 2-deoxy-alpha-D-ribose 1-phosphate + thymine. It functions in the pathway pyrimidine metabolism; dTMP biosynthesis via salvage pathway; dTMP from thymine: step 1/2. Functionally, the enzymes which catalyze the reversible phosphorolysis of pyrimidine nucleosides are involved in the degradation of these compounds and in their utilization as carbon and energy sources, or in the rescue of pyrimidine bases for nucleotide synthesis. The sequence is that of Thymidine phosphorylase from Shewanella baltica (strain OS155 / ATCC BAA-1091).